The following is a 156-amino-acid chain: Ribosomal RNA large subunit methyltransferase H (156 aa).

Residues L73, G104, and 123-128 (LSPLTF) contribute to the S-adenosyl-L-methionine site.

This sequence belongs to the RNA methyltransferase RlmH family. As to quaternary structure, homodimer.

It is found in the cytoplasm. The enzyme catalyses pseudouridine(1915) in 23S rRNA + S-adenosyl-L-methionine = N(3)-methylpseudouridine(1915) in 23S rRNA + S-adenosyl-L-homocysteine + H(+). In terms of biological role, specifically methylates the pseudouridine at position 1915 (m3Psi1915) in 23S rRNA. This is Ribosomal RNA large subunit methyltransferase H from Thioalkalivibrio sulfidiphilus (strain HL-EbGR7).